Reading from the N-terminus, the 143-residue chain is Actinoxanthin (143 aa).

An N-terminal signal peptide occupies residues 1–33 (MSLRHMSRRASRFGVVAVASIGLAAAAQSVAFA). 2 disulfide bridges follow: cysteine 69-cysteine 78 and cysteine 119-cysteine 124.

It belongs to the neocarzinostatin family.

Functionally, binds non-covalently to a chromophore which is the cytotoxic and mutagenic component of the antibiotic. The chromophore binds to DNA as a weak intercalator and causes single- and double-strand breaks. The sequence is that of Actinoxanthin (axnA) from Streptomyces globisporus.